We begin with the raw amino-acid sequence, 806 residues long: Leucine--tRNA ligase (806 aa).

Residues 54–64 (SYPSGDLHMGH) carry the 'HIGH' region motif. Residues 571–575 (KMSKS) carry the 'KMSKS' region motif. Lysine 574 contributes to the ATP binding site.

Belongs to the class-I aminoacyl-tRNA synthetase family.

Its subcellular location is the cytoplasm. It catalyses the reaction tRNA(Leu) + L-leucine + ATP = L-leucyl-tRNA(Leu) + AMP + diphosphate. The chain is Leucine--tRNA ligase from Tropheryma whipplei (strain Twist) (Whipple's bacillus).